The chain runs to 223 residues: Urease accessory protein UreF (223 aa).

This sequence belongs to the UreF family. UreD, UreF and UreG form a complex that acts as a GTP-hydrolysis-dependent molecular chaperone, activating the urease apoprotein by helping to assemble the nickel containing metallocenter of UreC. The UreE protein probably delivers the nickel.

It is found in the cytoplasm. Required for maturation of urease via the functional incorporation of the urease nickel metallocenter. This Rhizobium johnstonii (strain DSM 114642 / LMG 32736 / 3841) (Rhizobium leguminosarum bv. viciae) protein is Urease accessory protein UreF.